Here is a 2324-residue protein sequence, read N- to C-terminus: Myomegalin (2324 aa).

Coiled coils occupy residues 41–132 (REDV…LVEA), 158–205 (QVKL…LLEE), 238–288 (DSHL…SLKE), and 348–638 (LFCS…NKQA). Disordered regions lie at residues 72–96 (TWAD…EPQQ) and 205–240 (EPGG…SDSH). The span at 85–96 (AELRRQVEEPQQ) shows a compositional bias: basic and acidic residues. Residues 219–238 (PTQQKPDLNETPTTQPSVSD) are compositionally biased toward polar residues. The segment at 701–747 (PAGATSVGPHHGEQTDQGSTQMPSRDDSTSLTAREEASIPRSTLGDS) is disordered. T705 carries the phosphothreonine modification. The segment covering 724 to 738 (SRDDSTSLTAREEAS) has biased composition (basic and acidic residues). Coiled-coil stretches lie at residues 745–822 (GDSD…QLVD), 855–923 (ENRR…EEVL), and 1011–1043 (LRAE…GFSS). Disordered stretches follow at residues 1155–1182 (LPSS…SLKL) and 1195–1216 (NKSQ…STKH). 3 coiled-coil regions span residues 1213-1241 (STKH…SEAT), 1346-1384 (TSDD…LSAT), and 1430-1455 (GLQA…PKTG). Disordered regions lie at residues 1540 to 1559 (TDRL…KEEA), 1589 to 1610 (RFSS…SSTS), 1628 to 1685 (YTHY…IPKP), 1742 to 1773 (APPT…SPAR), 1857 to 1877 (LSST…GLES), and 2081 to 2140 (NQQP…TPPK). The Olduvai domain occupies 1550-1641 (KDHKSEKEEA…EEKKPSPSNS (92 aa)). Composition is skewed to low complexity over residues 1591–1610 (SSPP…SSTS) and 1637–1646 (SPSNSAASAS). Polar residues predominate over residues 1743-1767 (PPTSTSTLLSNHTEASSPRYSNPAQ). Residues 1821 to 2056 (GADLLEEHLG…LRLQLEQQMD (236 aa)) adopt a coiled-coil conformation. Composition is skewed to polar residues over residues 2081–2090 (NQQPPFQGSA) and 2108–2135 (PSNS…SAAT). Residues 2248–2274 (EEGNLMEKELLDLRAQVSQQQQLLQST) are a coiled coil.

Interacts with PDE4D. May interact with MAPRE1 and MAPRE3. May form a pericentrosomal complex with AKAP9, CDK5RAP2 and EB1/MAPRE1 in an isoform-specific manner; within this complex, may mediate MAPRE1-binding to CDK5RAP2. Interaction with AKAP9 stabilizes both proteins. May interact with CAMSAP2 in an isoform-specific manner; this interaction is much stronger in the presence of AKAP9. In complex with AKAP9, recruits CAMSAP2 to the Golgi apparatus. May interact with unglycosylated LGALS3BP in an isoform-specific manner; this interaction may connect the pericentrosomal complex to the gamma-tubulin ring complex (gamma-TuRC) to promote microtubule assembly and acetylation. As to expression, abundantly expressed in heart and skeletal muscle and to a lower extent in brain, lung and liver. Expressed in heart, skeletal muscle and testis (at protein level).

It localises to the cytoplasm. The protein resides in the cytoskeleton. The protein localises to the microtubule organizing center. It is found in the centrosome. Its subcellular location is the golgi apparatus. In terms of biological role, functions as an anchor sequestering components of the cAMP-dependent pathway to Golgi and/or centrosomes. May participate in microtubule dynamics, promoting microtubule assembly, in an isoform-specific manner. Depending upon the cell context, may act at the level of the Golgi apparatus or that of the centrosome. In complex with AKAP9, recruits CAMSAP2 to the Golgi apparatus and tethers non-centrosomal minus-end microtubules to the Golgi, an important step for polarized cell movement. In complex with AKAP9, EB1/MAPRE1 and CDK5RAP2, contributes to microtubules nucleation and extension from the centrosome to the cell periphery, a crucial process for directed cell migration, mitotic spindle orientation and cell-cycle progression. In Rattus norvegicus (Rat), this protein is Myomegalin (Pde4dip).